We begin with the raw amino-acid sequence, 192 residues long: Pyridoxal 5'-phosphate synthase subunit PdxT (192 aa).

53-55 contacts L-glutamine; sequence GES. The active-site Nucleophile is the Cys-85. L-glutamine is bound by residues Arg-112 and 140-141; that span reads IR. Catalysis depends on charge relay system residues His-176 and Glu-178.

This sequence belongs to the glutaminase PdxT/SNO family. As to quaternary structure, in the presence of PdxS, forms a dodecamer of heterodimers. Only shows activity in the heterodimer.

It catalyses the reaction aldehydo-D-ribose 5-phosphate + D-glyceraldehyde 3-phosphate + L-glutamine = pyridoxal 5'-phosphate + L-glutamate + phosphate + 3 H2O + H(+). The enzyme catalyses L-glutamine + H2O = L-glutamate + NH4(+). The protein operates within cofactor biosynthesis; pyridoxal 5'-phosphate biosynthesis. In terms of biological role, catalyzes the hydrolysis of glutamine to glutamate and ammonia as part of the biosynthesis of pyridoxal 5'-phosphate. The resulting ammonia molecule is channeled to the active site of PdxS. The chain is Pyridoxal 5'-phosphate synthase subunit PdxT from Natronomonas pharaonis (strain ATCC 35678 / DSM 2160 / CIP 103997 / JCM 8858 / NBRC 14720 / NCIMB 2260 / Gabara) (Halobacterium pharaonis).